Reading from the N-terminus, the 512-residue chain is Probable DNA ligase (512 aa).

Residue glutamate 208 participates in ATP binding. Lysine 210 (N6-AMP-lysine intermediate) is an active-site residue. Residues arginine 215, arginine 230, glutamate 259, phenylalanine 299, arginine 374, and lysine 380 each contribute to the ATP site.

This sequence belongs to the ATP-dependent DNA ligase family. Mg(2+) is required as a cofactor.

The catalysed reaction is ATP + (deoxyribonucleotide)n-3'-hydroxyl + 5'-phospho-(deoxyribonucleotide)m = (deoxyribonucleotide)n+m + AMP + diphosphate.. DNA ligase that seals nicks in double-stranded DNA during DNA replication, DNA recombination and DNA repair. The polypeptide is Probable DNA ligase (Streptomyces avermitilis (strain ATCC 31267 / DSM 46492 / JCM 5070 / NBRC 14893 / NCIMB 12804 / NRRL 8165 / MA-4680)).